A 257-amino-acid polypeptide reads, in one-letter code: Putative hydro-lyase Bcep18194_B2576 (257 aa).

This sequence belongs to the D-glutamate cyclase family.

In Burkholderia lata (strain ATCC 17760 / DSM 23089 / LMG 22485 / NCIMB 9086 / R18194 / 383), this protein is Putative hydro-lyase Bcep18194_B2576.